A 323-amino-acid chain; its full sequence is Aspartate carbamoyltransferase catalytic subunit (323 aa).

Residues R55 and T56 each contribute to the carbamoyl phosphate site. K83 provides a ligand contact to L-aspartate. Carbamoyl phosphate is bound by residues R105, H133, and Q136. L-aspartate is bound by residues R166 and R220. G261 and P262 together coordinate carbamoyl phosphate.

Belongs to the aspartate/ornithine carbamoyltransferase superfamily. ATCase family. As to quaternary structure, heterododecamer (2C3:3R2) of six catalytic PyrB chains organized as two trimers (C3), and six regulatory PyrI chains organized as three dimers (R2).

It catalyses the reaction carbamoyl phosphate + L-aspartate = N-carbamoyl-L-aspartate + phosphate + H(+). It functions in the pathway pyrimidine metabolism; UMP biosynthesis via de novo pathway; (S)-dihydroorotate from bicarbonate: step 2/3. Catalyzes the condensation of carbamoyl phosphate and aspartate to form carbamoyl aspartate and inorganic phosphate, the committed step in the de novo pyrimidine nucleotide biosynthesis pathway. This Acidothermus cellulolyticus (strain ATCC 43068 / DSM 8971 / 11B) protein is Aspartate carbamoyltransferase catalytic subunit.